Here is a 217-residue protein sequence, read N- to C-terminus: Small ribosomal subunit protein uS3 (217 aa).

The 69-residue stretch at 38–106 folds into the KH type-2 domain; it reads VRKYIETALK…RVHINIIEIK (69 aa).

The protein belongs to the universal ribosomal protein uS3 family. Part of the 30S ribosomal subunit. Forms a tight complex with proteins S10 and S14.

Its function is as follows. Binds the lower part of the 30S subunit head. Binds mRNA in the 70S ribosome, positioning it for translation. This is Small ribosomal subunit protein uS3 from Lysinibacillus sphaericus (strain C3-41).